Consider the following 46-residue polypeptide: Defensin Tk-AMP-D6.1 (46 aa).

Intrachain disulfides connect Cys3-Cys46, Cys14-Cys34, Cys20-Cys40, and Cys24-Cys42.

Its function is as follows. Plant defense peptide. The chain is Defensin Tk-AMP-D6.1 from Triticum kiharae (Wheat).